The primary structure comprises 674 residues: Methionine--tRNA ligase (674 aa).

The short motif at 11–21 (PYANGDLHLGH) is the 'HIGH' region element. Residues Cys-142, Cys-145, Cys-155, and Cys-158 each coordinate Zn(2+). Positions 330-334 (KMSKS) match the 'KMSKS' region motif. Lys-333 provides a ligand contact to ATP. The 101-residue stretch at 574–674 (DFMKVDLRIA…EGAQPGMRVK (101 aa)) folds into the tRNA-binding domain.

The protein belongs to the class-I aminoacyl-tRNA synthetase family. MetG type 1 subfamily. As to quaternary structure, homodimer. Zn(2+) is required as a cofactor.

Its subcellular location is the cytoplasm. It carries out the reaction tRNA(Met) + L-methionine + ATP = L-methionyl-tRNA(Met) + AMP + diphosphate. Is required not only for elongation of protein synthesis but also for the initiation of all mRNA translation through initiator tRNA(fMet) aminoacylation. The polypeptide is Methionine--tRNA ligase (Francisella tularensis subsp. tularensis (strain FSC 198)).